The sequence spans 748 residues: Peptidyl serine alpha-galactosyltransferase (748 aa).

The signal sequence occupies residues 1–26 (MVAVFHGPLVLGALLLLLALQHGASA). Topologically, residues 27–710 (EEPGFANRTG…GPSLHSLLGR (684 aa)) are extracellular. Residues Asn-33, Asn-184, and Asn-297 are each glycosylated (N-linked (GlcNAc...) asparagine). Residues 415–449 (CQDFHPKCEEWKESGECTKNENYMTENCRKTCDKC) enclose the ShKT domain. Intrachain disulfides connect Cys-415–Cys-449, Cys-422–Cys-442, and Cys-431–Cys-446. Disordered stretches follow at residues 474-576 (ELQP…ADPK) and 611-670 (EVPK…KKNI). The segment covering 531-565 (SPPPSPPPASPPPVDSPPPMSPPPESPSPDKPPPK) has biased composition (pro residues). Positions 611–637 (EVPKRTKATDEEEEAPKAKHAESHLTL) are enriched in basic and acidic residues. The chain crosses the membrane as a helical span at residues 711–731 (LNTWQALVLWLVVVVAFLALV). Topologically, residues 732–748 (PRIAKLRRRQRSGMRTE) are cytoplasmic.

Mn(2+) is required as a cofactor.

It localises to the membrane. Glycosyltransferase involved in the O-galactosylation of several proteins including extensins. Catalyzes the transfer of alpha-galactosyl to Ser residues. Hydroxylation of proline residues adjacent to the serine acceptor is required for activity. Utilizes selectively UDP-galactose as a donor nucleotide sugar. This is Peptidyl serine alpha-galactosyltransferase from Chlamydomonas reinhardtii (Chlamydomonas smithii).